A 311-amino-acid chain; its full sequence is Acetyl-coenzyme A carboxylase carboxyl transferase subunit alpha (311 aa).

The region spanning 36 to 286 (NLEKETQKVY…SDYVLKAIEE (251 aa)) is the CoA carboxyltransferase C-terminal domain.

The protein belongs to the AccA family. As to quaternary structure, acetyl-CoA carboxylase is a heterohexamer composed of biotin carboxyl carrier protein (AccB), biotin carboxylase (AccC) and two subunits each of ACCase subunit alpha (AccA) and ACCase subunit beta (AccD).

It is found in the cytoplasm. The catalysed reaction is N(6)-carboxybiotinyl-L-lysyl-[protein] + acetyl-CoA = N(6)-biotinyl-L-lysyl-[protein] + malonyl-CoA. The protein operates within lipid metabolism; malonyl-CoA biosynthesis; malonyl-CoA from acetyl-CoA: step 1/1. Its function is as follows. Component of the acetyl coenzyme A carboxylase (ACC) complex. First, biotin carboxylase catalyzes the carboxylation of biotin on its carrier protein (BCCP) and then the CO(2) group is transferred by the carboxyltransferase to acetyl-CoA to form malonyl-CoA. This Campylobacter lari (strain RM2100 / D67 / ATCC BAA-1060) protein is Acetyl-coenzyme A carboxylase carboxyl transferase subunit alpha.